The chain runs to 389 residues: Succinate--CoA ligase [ADP-forming] subunit beta (389 aa).

The ATP-grasp domain maps to 9–244; sequence KQILRKYGIP…PSQMSNNEAR (236 aa). ATP-binding positions include K46, 53 to 55, I102, and E107; that span reads GRG. Mg(2+) contacts are provided by N199 and D213. Substrate-binding positions include N264 and 321-323; that span reads GIM.

It belongs to the succinate/malate CoA ligase beta subunit family. Heterotetramer of two alpha and two beta subunits. Requires Mg(2+) as cofactor.

The catalysed reaction is succinate + ATP + CoA = succinyl-CoA + ADP + phosphate. It carries out the reaction GTP + succinate + CoA = succinyl-CoA + GDP + phosphate. It functions in the pathway carbohydrate metabolism; tricarboxylic acid cycle; succinate from succinyl-CoA (ligase route): step 1/1. Functionally, succinyl-CoA synthetase functions in the citric acid cycle (TCA), coupling the hydrolysis of succinyl-CoA to the synthesis of either ATP or GTP and thus represents the only step of substrate-level phosphorylation in the TCA. The beta subunit provides nucleotide specificity of the enzyme and binds the substrate succinate, while the binding sites for coenzyme A and phosphate are found in the alpha subunit. The chain is Succinate--CoA ligase [ADP-forming] subunit beta from Protochlamydia amoebophila (strain UWE25).